A 471-amino-acid polypeptide reads, in one-letter code: Regulator of microtubule dynamics protein 3 (471 aa).

The Mitochondrial intermembrane segment spans residues 1 to 9 (MSSLGTLGG). The chain crosses the membrane as a helical span at residues 10-32 (ARAGLGLLLGTAAGLGFLCALYS). Over 33 to 471 (QRWKRTQRRG…LEELEVILGE (439 aa)) the chain is Cytoplasmic. Positions 39 to 70 (QRRGQSQSQSNSLDYTQTSEPGRQVRPLRAAP) are disordered. Residues 41-50 (RGQSQSQSNS) show a composition bias toward low complexity. Ser44, Ser46, Ser50, and Ser57 each carry phosphoserine. Positions 90–123 (LDRLEFVLTSLVALRREVEELRSSLQGLAGQIVG) form a coiled coil. The FFAT signature appears at 156 to 162 (VYFTAAS). Position 159 is a phosphothreonine (Thr159). A disordered region spans residues 169–206 (AESEGGYTTANAESDYERDSERESDGDGEDEVSCETVK). Phosphoserine occurs at positions 182, 192, 212, and 233. The span at 183–193 (DYERDSERESD) shows a compositional bias: basic and acidic residues.

Belongs to the RMDN family. In terms of assembly, interacts with PTPN2. Interacts with microtubules. Interacts with VAPB. Interacts (via FFAT motif) with MOSPD2 (via MSP domain). Interacts (via phosphorylated FFAT motif) with MOSPD2, VAPA and VAPB. In terms of processing, phosphorylation at Thr-160 of the FFAT motif activates interaction with MOSPD2, VAPA and VAPB.

It is found in the mitochondrion outer membrane. It localises to the cytoplasm. The protein resides in the nucleus. The protein localises to the cytoskeleton. Its subcellular location is the spindle. It is found in the spindle pole. Functionally, involved in cellular calcium homeostasis regulation. May participate in differentiation and apoptosis of keratinocytes. Overexpression induces apoptosis. This Bos taurus (Bovine) protein is Regulator of microtubule dynamics protein 3.